The following is a 119-amino-acid chain: Large ribosomal subunit protein bL20 (119 aa).

Belongs to the bacterial ribosomal protein bL20 family.

Functionally, binds directly to 23S ribosomal RNA and is necessary for the in vitro assembly process of the 50S ribosomal subunit. It is not involved in the protein synthesizing functions of that subunit. This Clostridium beijerinckii (strain ATCC 51743 / NCIMB 8052) (Clostridium acetobutylicum) protein is Large ribosomal subunit protein bL20.